Consider the following 609-residue polypeptide: MQRSQRLSQMLFVTLREDPAEAELISHKLLLRGGFIRRLSPGIYTYLPLLWRVLQKISDIVREEMNAIGAQECLLPQLQPAEIWRESGRWDVYTQAEGIMFALKDRQGREQALGPTHEEVITLLARDLIRSYRQLPQILYQIQTKFRDEIRPRFGLLRGREFLMKDAYSFHANEESLRQTYQDMYRAYGRILRRCGLEFCVVEADAGAIGGPSAASQEFMVLASAGEDEILYTPDGSYAANVEKAVSLPPPAADSPYTTFQVLDTPGTETIEKLANFLKISPTLIVKNVLYQALYDNGLRVVVLLSIRGDQEVNEVKLANHLNRLAERYQANKLLKLTLADAEIQKSWQGDPIPVGYIAPDLPDSCLGRQKNLAPQILRLADQTAALLKNFVTGSNQVGRHVVGANWGEQYPLAEVVDVRKAQAGDRCLLNPDQILETARGIEIGHIFQLGLKFSLPMRASFTDEQGSEQPLWMGCYGIGVSRLAQAAVEQSHDANGIIWPVAIAPYHVVVVVPNVSDPEQTKVAEKLVQELAAAGIETLWDDRDERAGVKFKDADLIGIPYRLTTGRSLKQGKVELAERATGQAVEIPIEEVVATLKERIAAALAVPD.

Belongs to the class-II aminoacyl-tRNA synthetase family. ProS type 1 subfamily. In terms of assembly, homodimer.

The protein resides in the cytoplasm. The enzyme catalyses tRNA(Pro) + L-proline + ATP = L-prolyl-tRNA(Pro) + AMP + diphosphate. Its function is as follows. Catalyzes the attachment of proline to tRNA(Pro) in a two-step reaction: proline is first activated by ATP to form Pro-AMP and then transferred to the acceptor end of tRNA(Pro). As ProRS can inadvertently accommodate and process non-cognate amino acids such as alanine and cysteine, to avoid such errors it has two additional distinct editing activities against alanine. One activity is designated as 'pretransfer' editing and involves the tRNA(Pro)-independent hydrolysis of activated Ala-AMP. The other activity is designated 'posttransfer' editing and involves deacylation of mischarged Ala-tRNA(Pro). The misacylated Cys-tRNA(Pro) is not edited by ProRS. The sequence is that of Proline--tRNA ligase from Synechococcus sp. (strain JA-3-3Ab) (Cyanobacteria bacterium Yellowstone A-Prime).